The chain runs to 151 residues: Transmembrane protein 239 (151 aa).

Transmembrane regions (helical) follow at residues 61–81 (LWGL…HALF), 85–105 (SYLL…LLPA), and 116–138 (ALLF…GLLT).

The protein localises to the membrane. This chain is Transmembrane protein 239 (Tmem239), found in Mus musculus (Mouse).